A 203-amino-acid polypeptide reads, in one-letter code: ATP phosphoribosyltransferase (203 aa).

It belongs to the ATP phosphoribosyltransferase family. Short subfamily. As to quaternary structure, heteromultimer composed of HisG and HisZ subunits.

It localises to the cytoplasm. It carries out the reaction 1-(5-phospho-beta-D-ribosyl)-ATP + diphosphate = 5-phospho-alpha-D-ribose 1-diphosphate + ATP. It participates in amino-acid biosynthesis; L-histidine biosynthesis; L-histidine from 5-phospho-alpha-D-ribose 1-diphosphate: step 1/9. Its function is as follows. Catalyzes the condensation of ATP and 5-phosphoribose 1-diphosphate to form N'-(5'-phosphoribosyl)-ATP (PR-ATP). Has a crucial role in the pathway because the rate of histidine biosynthesis seems to be controlled primarily by regulation of HisG enzymatic activity. This chain is ATP phosphoribosyltransferase, found in Campylobacter fetus subsp. fetus (strain 82-40).